The primary structure comprises 264 residues: uncharacterized protein (264 aa).

Residue 15 to 22 (KGGTGKTT) participates in ATP binding.

It belongs to the ParA family. MinD subfamily.

This is an uncharacterized protein from Methanocaldococcus jannaschii (strain ATCC 43067 / DSM 2661 / JAL-1 / JCM 10045 / NBRC 100440) (Methanococcus jannaschii).